The chain runs to 335 residues: Cathepsin B (335 aa).

Positions 1-17 are cleaved as a signal peptide; it reads MWRLLATLSCLLVLTSA. A propeptide spans 18 to 79 (activation peptide); that stretch reads RSSLYFPPLS…QRDAFAADVV (62 aa). Disulfide bonds link Cys93-Cys122, Cys105-Cys150, Cys141-Cys207, Cys142-Cys146, Cys179-Cys211, and Cys187-Cys198. Cys108 is an active-site residue. N-linked (GlcNAc...) asparagine glycosylation occurs at Asn192. An N6-acetyllysine modification is found at Lys220. A disulfide bond links Cys227 and Cys331. Residues His278 and Asn298 contribute to the active site. The propeptide occupies 333–335; sequence HQY.

The protein belongs to the peptidase C1 family. Dimer of a heavy chain and a light chain cross-linked by a disulfide bond. Interacts with SRPX2. Directly interacts with SHKBP1. As to expression, expressed in myoblasts, the myotube, fibroblasts and fetal muscle (at protein level). Expressed in the spleen (at protein level).

The protein localises to the lysosome. The protein resides in the melanosome. It localises to the secreted. It is found in the extracellular space. Its subcellular location is the apical cell membrane. It carries out the reaction Hydrolysis of proteins with broad specificity for peptide bonds. Preferentially cleaves -Arg-Arg-|-Xaa bonds in small molecule substrates (thus differing from cathepsin L). In addition to being an endopeptidase, shows peptidyl-dipeptidase activity, liberating C-terminal dipeptides.. Its function is as follows. Thiol protease which is believed to participate in intracellular degradation and turnover of proteins. Cleaves matrix extracellular phosphoglycoprotein MEPE. Involved in the solubilization of cross-linked TG/thyroglobulin in the thyroid follicle lumen. Has also been implicated in tumor invasion and metastasis. The chain is Cathepsin B (CTSB) from Bos taurus (Bovine).